The sequence spans 158 residues: MRASRSPPSPRRCHHHHEATGAASGAAAGGPGAGCVGLCRLALTPSAQDGRNSTFQTYKKEVCLPRHSMHPGPWAICCECQTRFGGRLPVSRVEAALPYWVPLSLRPRKQHPCWMHAAGTTAGGSAVMSACCPSSSSSRPPTRTSYRLLQRVCCPSAS.

Residues 1–26 (MRASRSPPSPRRCHHHHEATGAASGA) are disordered.

This is an uncharacterized protein from Homo sapiens (Human).